The chain runs to 97 residues: Nucleoid-associated protein HP_0035 (97 aa).

Belongs to the YbaB/EbfC family. As to quaternary structure, homodimer.

Its subcellular location is the cytoplasm. It localises to the nucleoid. Functionally, binds to DNA and alters its conformation. May be involved in regulation of gene expression, nucleoid organization and DNA protection. The protein is Nucleoid-associated protein HP_0035 of Helicobacter pylori (strain ATCC 700392 / 26695) (Campylobacter pylori).